The following is a 147-amino-acid chain: Myoglobin (147 aa).

In terms of domain architecture, Globin spans 2-141 (ADFDAVLKCW…IIADLEANYK (140 aa)). H60 lines the nitrite pocket. H60 lines the O2 pocket. H89 is a binding site for heme b.

The protein belongs to the globin family. As to quaternary structure, monomeric.

It localises to the cytoplasm. It is found in the sarcoplasm. The enzyme catalyses Fe(III)-heme b-[protein] + nitric oxide + H2O = Fe(II)-heme b-[protein] + nitrite + 2 H(+). It catalyses the reaction H2O2 + AH2 = A + 2 H2O. Its function is as follows. Monomeric heme protein which primary function is to store oxygen and facilitate its diffusion within muscle tissues. Reversibly binds oxygen through a pentacoordinated heme iron and enables its timely and efficient release as needed during periods of heightened demand. Depending on the oxidative conditions of tissues and cells, and in addition to its ability to bind oxygen, it also has a nitrite reductase activity whereby it regulates the production of bioactive nitric oxide. Under stress conditions, like hypoxia and anoxia, it also protects cells against reactive oxygen species thanks to its pseudoperoxidase activity. This is Myoglobin (mb) from Thunnus obesus (Bigeye tuna).